Here is a 513-residue protein sequence, read N- to C-terminus: ATP synthase subunit alpha (513 aa).

Residue 169-176 (GDRQIGKT) coordinates ATP.

This sequence belongs to the ATPase alpha/beta chains family. As to quaternary structure, F-type ATPases have 2 components, CF(1) - the catalytic core - and CF(0) - the membrane proton channel. CF(1) has five subunits: alpha(3), beta(3), gamma(1), delta(1), epsilon(1). CF(0) has three main subunits: a(1), b(2) and c(9-12). The alpha and beta chains form an alternating ring which encloses part of the gamma chain. CF(1) is attached to CF(0) by a central stalk formed by the gamma and epsilon chains, while a peripheral stalk is formed by the delta and b chains.

It localises to the cell inner membrane. The enzyme catalyses ATP + H2O + 4 H(+)(in) = ADP + phosphate + 5 H(+)(out). Produces ATP from ADP in the presence of a proton gradient across the membrane. The alpha chain is a regulatory subunit. The polypeptide is ATP synthase subunit alpha (Shewanella piezotolerans (strain WP3 / JCM 13877)).